A 229-amino-acid polypeptide reads, in one-letter code: Nectarin-1 (229 aa).

A signal peptide spans 1–32 (MAAFGIKSKIFQIMEMTILFLFAISIDRYCFA). A disulfide bridge links Cys-42 with Cys-57. Asn-60 carries an N-linked (GlcNAc...) asparagine glycan. Positions 69–217 (FAISKPGATN…TFQINIEDVQ (149 aa)) constitute a Cupin type-1 domain. Mn(2+) contacts are provided by His-117, His-119, Glu-124, and His-163.

The protein belongs to the germin family. In terms of assembly, monomer. In the absence of manganese, it forms tetrameric and pentameric forms which show superoxide dismutase activity. The cofactor is Mn(2+). Glycosylated.

It localises to the secreted. The protein resides in the extracellular space. Its subcellular location is the apoplast. The catalysed reaction is 2 superoxide + 2 H(+) = H2O2 + O2. Its function is as follows. May interact with bacterial adhesins thereby protecting the reproductive tissues from microbial attack. Has no oxalate oxidase activity. The polypeptide is Nectarin-1 (NEC1) (Nicotiana plumbaginifolia (Leadwort-leaved tobacco)).